The chain runs to 110 residues: AYDMTQTPSSVSAAVGGTVTINCQASEDISANLAWYQQKPGQPPKLLIYAASDLASGVPSRFKGSGSGTEYTLTISGVQCADAATYYCQSADYSGSAVTFGGGTEVVVKG.

The interval 1–23 (AYDMTQTPSSVSAAVGGTVTINC) is framework-1. A complementarity-determining-1 region spans residues 24–34 (QASEDISANLA). The tract at residues 35 to 49 (WYQQKPGQPPKLLIY) is framework-2. The tract at residues 50–56 (AASDLAS) is complementarity-determining-2. A framework-3 region spans residues 57–88 (GVPSRFKGSGSGTEYTLTISGVQCADAATYYC). The segment at 89–99 (QSADYSGSAVT) is complementarity-determining-3. A framework-4 region spans residues 100–109 (FGGGTEVVVK).

The chain is Ig kappa chain V region 3547 from Oryctolagus cuniculus (Rabbit).